A 617-amino-acid chain; its full sequence is Arrestin domain-containing protein B (617 aa).

Residues 1–109 (MDNRGLRLFI…ATFGQTDKWL (109 aa)) form the C2 domain. Ca(2+) contacts are provided by Asp-20, Asp-27, Asp-76, Asp-78, and Asp-84.

This sequence belongs to the arrestin family. It depends on Ca(2+) as a cofactor.

In Dictyostelium discoideum (Social amoeba), this protein is Arrestin domain-containing protein B (adcB).